The sequence spans 209 residues: Large ribosomal subunit protein uL3 (209 aa).

Gln150 carries the post-translational modification N5-methylglutamine.

Belongs to the universal ribosomal protein uL3 family. In terms of assembly, part of the 50S ribosomal subunit. Forms a cluster with proteins L14 and L19. Post-translationally, methylated by PrmB.

Its function is as follows. One of the primary rRNA binding proteins, it binds directly near the 3'-end of the 23S rRNA, where it nucleates assembly of the 50S subunit. In Proteus mirabilis (strain HI4320), this protein is Large ribosomal subunit protein uL3.